Reading from the N-terminus, the 244-residue chain is Probable transcriptional regulatory protein DNO_1179 (244 aa).

It belongs to the TACO1 family.

It is found in the cytoplasm. The polypeptide is Probable transcriptional regulatory protein DNO_1179 (Dichelobacter nodosus (strain VCS1703A)).